A 547-amino-acid polypeptide reads, in one-letter code: GID complex substrate-recognition subunit 10 (547 aa).

Polar residues-rich tracts occupy residues 1-11 and 28-41; these read MPRSLDNFQNE and GFPN…SNSQ. Disordered regions lie at residues 1 to 42, 60 to 115, 169 to 217, and 285 to 313; these read MPRS…NSQR, EQDS…SNAT, RNSS…NPQS, and PAVL…QTPN. Positions 99–108 are enriched in basic residues; sequence SASRQRRRSG. Residues 169–185 show a composition bias toward polar residues; it reads RNSSTFGSNPNSVFSAQ. Low complexity-rich tracts occupy residues 186–199, 207–217, and 298–307; these read PTEP…SSFP, SRSISISNPQS, and SSSSASSYGS.

It belongs to the GID4/VID24 family. Substrate-recognition component of the GID/CTLH complex. In the absence of stress, the complex exists as an inactive anticipatory complex (GID(Ant)), composed of Gid1, the E3 ubiquitin-ligase Gid2, Gid5, Gid8, and the RING-like subunit Gid9, awaiting a substrate receptor to form the active E3 ligase complex. When cells are shifted to glucose-containing medium, the substrate receptor Gid4 is induced and becomes part of the complex, named GID(SR4). Additionally, Gid7 transforms the GID(SR4) E3 ligase core into a higher-order supramolecular assembly (Chelator-GID(SR4)). Under osmotic or heat stress, the substrate receptor Gid10 is induced and becomes part of the complex, named GID(SR10). Interacts with proteins that have an N-terminal Pro/N-degron.

The protein resides in the nucleus. Its function is as follows. Substrate-recognition component of the GID E3 ligase complex recruiting N termini and catalyzing ubiquitination of proteins targeted for degradation. GID E3 is regulated through assembly with interchangeable N-degron-binding substrate receptors induced by distinct environmental perturbations. Required for the adaptation to osmotic or heat stress. Specific for substrates with an N-terminal Pro (Pro/N-degron). The protein is GID complex substrate-recognition subunit 10 (gid10) of Schizosaccharomyces pombe (strain 972 / ATCC 24843) (Fission yeast).